A 663-amino-acid chain; its full sequence is UvrABC system protein B (663 aa).

A compositionally biased stretch (basic and acidic residues) spans 1-10 (MIDKRDDKPF). The tract at residues 1–23 (MIDKRDDKPFKLKSKYKPSGDQP) is disordered. Residues 31–271 (DNIEGGEKAQ…EQSIAKIQAE (241 aa)) enclose the Helicase ATP-binding domain. An ATP-binding site is contributed by 44–51 (GATGTGKT). The short motif at 97 to 120 (YYDYYQPEAYVPSSDTYIEKDSSV) is the Beta-hairpin element. Positions 435–601 (QMDDLLGEIN…TIKKDIRGLI (167 aa)) constitute a Helicase C-terminal domain. The UVR domain occupies 627-662 (KEAINALQKQMQEAAELLDFELAAQMRDLILELKLM).

Belongs to the UvrB family. Forms a heterotetramer with UvrA during the search for lesions. Interacts with UvrC in an incision complex.

Its subcellular location is the cytoplasm. Its function is as follows. The UvrABC repair system catalyzes the recognition and processing of DNA lesions. A damage recognition complex composed of 2 UvrA and 2 UvrB subunits scans DNA for abnormalities. Upon binding of the UvrA(2)B(2) complex to a putative damaged site, the DNA wraps around one UvrB monomer. DNA wrap is dependent on ATP binding by UvrB and probably causes local melting of the DNA helix, facilitating insertion of UvrB beta-hairpin between the DNA strands. Then UvrB probes one DNA strand for the presence of a lesion. If a lesion is found the UvrA subunits dissociate and the UvrB-DNA preincision complex is formed. This complex is subsequently bound by UvrC and the second UvrB is released. If no lesion is found, the DNA wraps around the other UvrB subunit that will check the other stand for damage. The polypeptide is UvrABC system protein B (Streptococcus pyogenes serotype M2 (strain MGAS10270)).